Here is a 546-residue protein sequence, read N- to C-terminus: Amidophosphoribosyltransferase (546 aa).

The segment covering 1 to 26 (MSAPQQQQQSQQKQQQHVRVVEQQQV) has biased composition (low complexity). The disordered stretch occupies residues 1-39 (MSAPQQQQQSQQKQQQHVRVVEQQQVEPAEAVTSSMESE). A propeptide spanning residues 1-53 (MSAPQQQQQSQQKQQQHVRVVEQQQVEPAEAVTSSMESESISASKELTGLTHE) is cleaved from the precursor. The active-site Nucleophile is the cysteine 54. Positions 54 to 302 (CGVFGAIACG…PGEIVELSRS (249 aa)) constitute a Glutamine amidotransferase type-2 domain. Serine 113 bears the Phosphoserine mark. Threonine 114 carries the phosphothreonine modification. Serine 120 carries the post-translational modification Phosphoserine. A [4Fe-4S] cluster-binding site is contributed by cysteine 321. Residues serine 368, aspartate 430, and aspartate 431 each contribute to the Mg(2+) site. The [4Fe-4S] cluster site is built by cysteine 467, cysteine 528, and cysteine 531.

It in the C-terminal section; belongs to the purine/pyrimidine phosphoribosyltransferase family. The cofactor is Mg(2+). It depends on [4Fe-4S] cluster as a cofactor.

The enzyme catalyses 5-phospho-beta-D-ribosylamine + L-glutamate + diphosphate = 5-phospho-alpha-D-ribose 1-diphosphate + L-glutamine + H2O. The protein operates within purine metabolism; IMP biosynthesis via de novo pathway; N(1)-(5-phospho-D-ribosyl)glycinamide from 5-phospho-alpha-D-ribose 1-diphosphate: step 1/2. Functionally, involved in the first step (and regulatory point) of the de novo biosynthesis of purine nucleotides, where it catalyzes the transfer of glutamine amide to 5-phospho-alpha-D-ribose 1-diphosphate. This chain is Amidophosphoribosyltransferase (Prat), found in Drosophila melanogaster (Fruit fly).